Consider the following 1198-residue polypeptide: Spindle-defective protein 5 (1198 aa).

The span at methionine 1–aspartate 10 shows a compositional bias: polar residues. The tract at residues methionine 1–glutamine 45 is disordered. Coiled-coil stretches lie at residues glutamate 67 to glycine 381, histidine 566 to isoleucine 603, lysine 694 to serine 916, aspartate 983 to proline 1035, and lysine 1127 to aspartate 1175.

It is found in the cytoplasm. The protein resides in the cytoskeleton. Its subcellular location is the microtubule organizing center. It localises to the centrosome. Its function is as follows. Plays a central role in centrosome maturation and mitotic spindle assembly during the first division of the zygote. Required for the centrosomal localization of air-1 and zyg-9. Probably not required in late embryogenesis and during larval development. This Caenorhabditis elegans protein is Spindle-defective protein 5 (spd-5).